We begin with the raw amino-acid sequence, 414 residues long: Ceramide synthase 5 (414 aa).

Topologically, residues M1 to R43 are lumenal. N-linked (GlcNAc...) asparagine glycosylation occurs at N26. A helical membrane pass occupies residues A44–F64. The interval R75–P136 is homeobox-like. The region spanning T139–S340 is the TLC domain. A run of 4 helical transmembrane segments spans residues F148 to F168, L187 to I207, F214 to N234, and L272 to I292. Residues E299–S309 carry the Last loop motif motif. A helical transmembrane segment spans residues L312–V332. At Q333–D414 the chain is on the cytoplasmic side. The segment at D347–S373 is disordered.

As to quaternary structure, interacts with PAQR4; the interaction regulates the stability and activity of CERS5 and is inhibited in presence of ceramides. In terms of processing, phosphorylated at the C-terminus by CK2. As to expression, ubiquitously expressed, with highest levels in testis and kidney. Expressed in pulmonary epithelia.

It is found in the endoplasmic reticulum membrane. It carries out the reaction a sphingoid base + hexadecanoyl-CoA = an N-hexadecanoyl-sphingoid base + CoA + H(+). It catalyses the reaction sphinganine + hexadecanoyl-CoA = N-hexadecanoylsphinganine + CoA + H(+). The enzyme catalyses hexadecasphinganine + hexadecanoyl-CoA = N-hexadecanoylhexadecasphinganine + CoA + H(+). The catalysed reaction is sphing-4-enine + hexadecanoyl-CoA = N-hexadecanoylsphing-4-enine + CoA + H(+). It carries out the reaction 2-hydroxyhexadecanoyl-CoA + sphinganine = N-(2-hydroxyhexadecanoyl)-sphinganine + CoA + H(+). It catalyses the reaction sphinganine + tetradecanoyl-CoA = N-(tetradecanoyl)-sphinganine + CoA + H(+). The enzyme catalyses sphinganine + octadecanoyl-CoA = N-(octadecanoyl)-sphinganine + CoA + H(+). The catalysed reaction is sphinganine + (9Z)-octadecenoyl-CoA = N-(9Z-octadecenoyl)-sphinganine + CoA + H(+). It carries out the reaction a fatty acyl-CoA + sphing-4-enine = an N-acylsphing-4-enine + CoA + H(+). It catalyses the reaction tetracosenoyl-CoA + sphing-4-enine = N-(tetracosenoyl)-sphing-4-enine + CoA + H(+). Its pathway is lipid metabolism; sphingolipid metabolism. Its activity is regulated as follows. Inhibited by fumonisin B1. Its function is as follows. Ceramide synthase that catalyzes the transfer of the acyl chain from acyl-CoA to a sphingoid base, with high selectivity toward palmitoyl-CoA (hexadecanoyl-CoA; C16:0-CoA). Can use other acyl donors, but with less efficiency. N-acylates sphinganine and sphingosine bases to form dihydroceramides and ceramides in de novo synthesis and salvage pathways, respectively. Plays a role in de novo ceramide synthesis and surfactant homeostasis in pulmonary epithelia. This is Ceramide synthase 5 from Mus musculus (Mouse).